A 91-amino-acid polypeptide reads, in one-letter code: Parbolysin P6 (91 aa).

3 disulfides stabilise this stretch: cysteine 16–cysteine 37, cysteine 22–cysteine 33, and cysteine 47–cysteine 60.

It belongs to the worm cytolysin family. As to expression, localized within the skin and proboscis and are most readily isolated from body mucus secretions.

The protein localises to the secreted. Cytolysin that shows hemolytic activity (on bovine erythrocytes, HC(50)=5.75 mg/ml). This hemolytic activity is completely inhibited by small unilamelar vesicles composed of PC/PG, PC/PI and PC/PS in 1:1 molar ratios (with at least 100 mg/ml concentration). The polypeptide is Parbolysin P6 (Parborlasia corrugatus (Antarctic nemertean worm)).